Here is a 490-residue protein sequence, read N- to C-terminus: ATP-dependent 6-phosphofructokinase (490 aa).

ATP is bound by residues Gly-109, 175–176 (RG), and 200–203 (GDGT). A Mg(2+)-binding site is contributed by Asp-201. Residues 229–231 (TID), 274–276 (MGR), Glu-327, and 383–386 (YMIR) each bind substrate. Asp-231 (proton acceptor) is an active-site residue. Positions 488–490 (SKL) match the Peroxisomal targeting signal motif.

This sequence belongs to the phosphofructokinase type A (PFKA) family. PPi-dependent PFK group II subfamily. Atypical ATP-dependent clade 'X' sub-subfamily. Homotetramer. Mg(2+) is required as a cofactor.

The protein resides in the glycosome. It carries out the reaction beta-D-fructose 6-phosphate + ATP = beta-D-fructose 1,6-bisphosphate + ADP + H(+). It functions in the pathway carbohydrate degradation; glycolysis; D-glyceraldehyde 3-phosphate and glycerone phosphate from D-glucose: step 3/4. Its activity is regulated as follows. Allosterically activated by AMP. Catalyzes the phosphorylation of D-fructose 6-phosphate to fructose 1,6-bisphosphate by ATP, the first committing step of glycolysis. This is ATP-dependent 6-phosphofructokinase from Trypanoplasma borreli.